Reading from the N-terminus, the 154-residue chain is Spermatogenesis-associated protein 19, mitochondrial (154 aa).

The N-terminal 24 residues, methionine 1 to valine 24, are a transit peptide targeting the mitochondrion. Phosphoserine occurs at positions 26 and 116.

In terms of tissue distribution, expressed in the testis.

It localises to the mitochondrion outer membrane. It is found in the mitochondrion. The protein localises to the cell projection. The protein resides in the cilium. Its subcellular location is the flagellum. In terms of biological role, essential for sperm motility and male fertility. Plays an important role in sperm motility by regulating the organization and function of the mitochondria and is also required for correct sperm midpiece assembly. This Rattus norvegicus (Rat) protein is Spermatogenesis-associated protein 19, mitochondrial (Spata19).